Reading from the N-terminus, the 745-residue chain is Probable xanthine dehydrogenase subunit D (745 aa).

Mo-molybdopterin-binding residues include Gln204, Phe235, and Ala508.

It belongs to the xanthine dehydrogenase family. Could be composed of four subunits: PucA, PucC, PucD and PucE. It depends on Mo-molybdopterin as a cofactor.

The enzyme catalyses xanthine + NAD(+) + H2O = urate + NADH + H(+). The catalysed reaction is hypoxanthine + NAD(+) + H2O = xanthine + NADH + H(+). Its pathway is purine metabolism; hypoxanthine degradation; urate from hypoxanthine: step 1/2. The protein operates within purine metabolism; hypoxanthine degradation; urate from hypoxanthine: step 2/2. Its function is as follows. Oxidizes hypoxanthine and xanthine to uric acid. The protein is Probable xanthine dehydrogenase subunit D (pucD) of Bacillus subtilis (strain 168).